We begin with the raw amino-acid sequence, 240 residues long: Pyridoxine 5'-phosphate synthase (240 aa).

Asparagine 7 is a binding site for 3-amino-2-oxopropyl phosphate. 9–10 (DH) provides a ligand contact to 1-deoxy-D-xylulose 5-phosphate. A 3-amino-2-oxopropyl phosphate-binding site is contributed by arginine 18. The active-site Proton acceptor is histidine 43. Positions 45 and 50 each coordinate 1-deoxy-D-xylulose 5-phosphate. Glutamate 70 functions as the Proton acceptor in the catalytic mechanism. Threonine 100 contributes to the 1-deoxy-D-xylulose 5-phosphate binding site. Histidine 191 serves as the catalytic Proton donor. Residues glycine 192 and 213-214 (GH) each bind 3-amino-2-oxopropyl phosphate.

The protein belongs to the PNP synthase family. In terms of assembly, homooctamer; tetramer of dimers.

The protein resides in the cytoplasm. The enzyme catalyses 3-amino-2-oxopropyl phosphate + 1-deoxy-D-xylulose 5-phosphate = pyridoxine 5'-phosphate + phosphate + 2 H2O + H(+). The protein operates within cofactor biosynthesis; pyridoxine 5'-phosphate biosynthesis; pyridoxine 5'-phosphate from D-erythrose 4-phosphate: step 5/5. Its function is as follows. Catalyzes the complicated ring closure reaction between the two acyclic compounds 1-deoxy-D-xylulose-5-phosphate (DXP) and 3-amino-2-oxopropyl phosphate (1-amino-acetone-3-phosphate or AAP) to form pyridoxine 5'-phosphate (PNP) and inorganic phosphate. In Trichodesmium erythraeum (strain IMS101), this protein is Pyridoxine 5'-phosphate synthase.